The following is a 457-amino-acid chain: Transcription factor E2F3 (457 aa).

Positions 80-171 (LLPSVPGTEP…PKSPSEKTRY (92 aa)) are disordered. Residues 93-102 (SLYTTPQGPS) show a composition bias toward polar residues. Positions 96–145 (TTPQGPSSRVGLLQQPPAPGRGGGGGPPAKRRLELGESGHQYLSDGLKTP) are cyclin A/CDK2 binding. Residues 147 to 237 (GKGRAALRSP…KNNVQWMGCS (91 aa)) mediate DNA binding. Residues 155–164 (SPDSPKTPKS) are compositionally biased toward low complexity. Positions 196–217 (LNKAAEVLKVQKRRIYDITNVL) are leucine-zipper. The DEF box signature appears at 201-237 (EVLKVQKRRIYDITNVLEGIHLIKKKSKNNVQWMGCS). The dimerization stretch occupies residues 238–329 (LSEDGGMLAQ…VPDSIESLQI (92 aa)). The interval 350 to 387 (HRPMKTNNQDHNGNIPKPTSKDLASNNSGHSDCSVSTA) is disordered. A compositionally biased stretch (polar residues) spans 371–387 (DLASNNSGHSDCSVSTA). Positions 383 to 457 (SVSTANLSPL…LPLVEDFMCS (75 aa)) are transactivation. Residues 424–441 (EDYLLSLGEEEGISDLFD) form a retinoblastoma protein binding region.

It belongs to the E2F/DP family. As to quaternary structure, component of the DRTF1/E2F transcription factor complex. Binds cooperatively with TFDP1/Dp-1 to E2F sites. Interacts with retinoblastoma protein RB1 and related proteins (such as RBL1) that inhibit the E2F transactivation domain. Binds EAPP.

It is found in the nucleus. Its function is as follows. Transcription activator that binds DNA cooperatively with DP proteins through the E2 recognition site, 5'-TTTC[CG]CGC-3' found in the promoter region of a number of genes whose products are involved in cell cycle regulation or in DNA replication. The DRTF1/E2F complex functions in the control of cell-cycle progression from G1 to S phase. E2F3 binds specifically to RB1 in a cell-cycle dependent manner. Inhibits adipogenesis, probably through the repression of CEBPA binding to its target gene promoters. In Mus musculus (Mouse), this protein is Transcription factor E2F3 (E2f3).